The primary structure comprises 320 residues: Putative cyclin-D7-1 (320 aa).

Residues 1-46 (MDDDDDTSFNNSLDLYCDEDPFDSTPPPPPPPPEQQQQAGTTTPDD) form a disordered region. Pro residues predominate over residues 24 to 34 (STPPPPPPPPE). The segment covering 35–44 (QQQQAGTTTP) has biased composition (low complexity).

It belongs to the cyclin family. Cyclin D subfamily.

The protein is Putative cyclin-D7-1 (CYCD7-1) of Oryza sativa subsp. japonica (Rice).